The sequence spans 497 residues: Anthranilate synthase component 1 (497 aa).

Residues Ser49 and 271 to 273 (PYL) each bind L-tryptophan. Position 312–313 (312–313 (GT)) interacts with chorismate. Residue Glu339 participates in Mg(2+) binding. Residues Arg447, 461–463 (GAG), and Gly463 contribute to the chorismate site. Glu476 contributes to the Mg(2+) binding site.

Belongs to the anthranilate synthase component I family. As to quaternary structure, heterotetramer consisting of two non-identical subunits: a beta subunit (TrpG) and a large alpha subunit (TrpE). The cofactor is Mg(2+).

It catalyses the reaction chorismate + L-glutamine = anthranilate + pyruvate + L-glutamate + H(+). The protein operates within amino-acid biosynthesis; L-tryptophan biosynthesis; L-tryptophan from chorismate: step 1/5. Feedback inhibited by tryptophan. Part of a heterotetrameric complex that catalyzes the two-step biosynthesis of anthranilate, an intermediate in the biosynthesis of L-tryptophan. In the first step, the glutamine-binding beta subunit (TrpG) of anthranilate synthase (AS) provides the glutamine amidotransferase activity which generates ammonia as a substrate that, along with chorismate, is used in the second step, catalyzed by the large alpha subunit of AS (TrpE) to produce anthranilate. In the absence of TrpG, TrpE can synthesize anthranilate directly from chorismate and high concentrations of ammonia. The sequence is that of Anthranilate synthase component 1 (trpE) from Acinetobacter calcoaceticus.